The sequence spans 185 residues: Ribosome-recycling factor (185 aa).

This sequence belongs to the RRF family.

It localises to the cytoplasm. In terms of biological role, responsible for the release of ribosomes from messenger RNA at the termination of protein biosynthesis. May increase the efficiency of translation by recycling ribosomes from one round of translation to another. This chain is Ribosome-recycling factor, found in Wolbachia pipientis wMel.